Here is a 1242-residue protein sequence, read N- to C-terminus: DNA-directed RNA polymerase RPB2 homolog (1242 aa).

Residues 1180 to 1201 form a C4-type zinc finger; it reads CRNCGEPAIYNASHPIYKCMNC.

Belongs to the RNA polymerase beta chain family. In terms of assembly, part of the viral DNA-directed RNA polymerase that consists of 8 polII-like subunits (RPB1, RPB2, RPB3, RPB5, RPB6, RPB7, RPB9, RPB10), a capping enzyme and a termination factor.

It localises to the host cytoplasm. The protein localises to the virion. The catalysed reaction is RNA(n) + a ribonucleoside 5'-triphosphate = RNA(n+1) + diphosphate. In terms of biological role, catalytic component of the DNA-directed RNA polymerase (RNAP) that catalyzes the transcription in the cytoplasm of viral DNA into RNA using the four ribonucleoside triphosphates as substrates. Forms the polymerase active center together with RPB1. Part of the core element with the central large cleft, the clamp element that moves to open and close the cleft and the jaws that are thought to grab the incoming DNA template. This Ornithodoros (relapsing fever ticks) protein is DNA-directed RNA polymerase RPB2 homolog.